A 445-amino-acid polypeptide reads, in one-letter code: Glutamate-1-semialdehyde 2,1-aminomutase (445 aa).

At Lys-263 the chain carries N6-(pyridoxal phosphate)lysine.

It belongs to the class-III pyridoxal-phosphate-dependent aminotransferase family. HemL subfamily. Pyridoxal 5'-phosphate serves as cofactor.

It localises to the cytoplasm. The catalysed reaction is (S)-4-amino-5-oxopentanoate = 5-aminolevulinate. It participates in porphyrin-containing compound metabolism; protoporphyrin-IX biosynthesis; 5-aminolevulinate from L-glutamyl-tRNA(Glu): step 2/2. The protein is Glutamate-1-semialdehyde 2,1-aminomutase of Halorubrum lacusprofundi (strain ATCC 49239 / DSM 5036 / JCM 8891 / ACAM 34).